Consider the following 92-residue polypeptide: Probable Fe(2+)-trafficking protein (92 aa).

This sequence belongs to the Fe(2+)-trafficking protein family.

Its function is as follows. Could be a mediator in iron transactions between iron acquisition and iron-requiring processes, such as synthesis and/or repair of Fe-S clusters in biosynthetic enzymes. This is Probable Fe(2+)-trafficking protein from Shewanella oneidensis (strain ATCC 700550 / JCM 31522 / CIP 106686 / LMG 19005 / NCIMB 14063 / MR-1).